A 297-amino-acid polypeptide reads, in one-letter code: Nucleotide-binding protein CJA_2809 (297 aa).

8 to 15 (GLSGSGKT) provides a ligand contact to ATP. GTP is bound at residue 59–62 (DVRN).

The protein belongs to the RapZ-like family.

Its function is as follows. Displays ATPase and GTPase activities. This is Nucleotide-binding protein CJA_2809 from Cellvibrio japonicus (strain Ueda107) (Pseudomonas fluorescens subsp. cellulosa).